We begin with the raw amino-acid sequence, 84 residues long: Large ribosomal subunit protein bL31B-2 (84 aa).

It belongs to the bacterial ribosomal protein bL31 family. Type B subfamily. Part of the 50S ribosomal subunit.

The sequence is that of Large ribosomal subunit protein bL31B-2 from Streptomyces coelicolor (strain ATCC BAA-471 / A3(2) / M145).